A 677-amino-acid polypeptide reads, in one-letter code: Methionine--tRNA ligase (677 aa).

Residues 14–24 (PYANGAIHLGH) carry the 'HIGH' region motif. Residues Cys-145, Cys-148, Cys-158, and Cys-161 each coordinate Zn(2+). A 'KMSKS' region motif is present at residues 330–334 (KMSKS). Residue Lys-333 participates in ATP binding. One can recognise a tRNA-binding domain in the interval 576–677 (DFAKVDLRVA…EGALPGMRVM (102 aa)).

The protein belongs to the class-I aminoacyl-tRNA synthetase family. MetG type 1 subfamily. In terms of assembly, homodimer. Zn(2+) is required as a cofactor.

Its subcellular location is the cytoplasm. The enzyme catalyses tRNA(Met) + L-methionine + ATP = L-methionyl-tRNA(Met) + AMP + diphosphate. Its function is as follows. Is required not only for elongation of protein synthesis but also for the initiation of all mRNA translation through initiator tRNA(fMet) aminoacylation. The chain is Methionine--tRNA ligase from Saccharophagus degradans (strain 2-40 / ATCC 43961 / DSM 17024).